Consider the following 392-residue polypeptide: GTPase Obg (392 aa).

One can recognise an Obg domain in the interval 1 to 159 (MKFIDEALIR…RDLQLELMLL (159 aa)). The OBG-type G domain occupies 160–333 (ADVGMLGLPN…LCRDIMDFIE (174 aa)). Residues 166 to 173 (GLPNAGKS), 191 to 195 (FTTLV), 213 to 216 (DIPG), 283 to 286 (NKID), and 314 to 316 (SAA) each bind GTP. Mg(2+) is bound by residues Ser173 and Thr193. A disordered region spans residues 362–392 (EQVFTEDDQEGDDWDDWSEDDEEGVEIIYKP). A compositionally biased stretch (acidic residues) spans 365 to 386 (FTEDDQEGDDWDDWSEDDEEGV).

It belongs to the TRAFAC class OBG-HflX-like GTPase superfamily. OBG GTPase family. Monomer. Requires Mg(2+) as cofactor.

Its subcellular location is the cytoplasm. An essential GTPase which binds GTP, GDP and possibly (p)ppGpp with moderate affinity, with high nucleotide exchange rates and a fairly low GTP hydrolysis rate. Plays a role in control of the cell cycle, stress response, ribosome biogenesis and in those bacteria that undergo differentiation, in morphogenesis control. In Histophilus somni (strain 129Pt) (Haemophilus somnus), this protein is GTPase Obg.